The primary structure comprises 283 residues: NFU1 iron-sulfur cluster scaffold homolog, mitochondrial (283 aa).

A mitochondrion-targeting transit peptide spans methionine 1–arginine 65. The nifU stretch occupies residues isoleucine 182–valine 250. [4Fe-4S] cluster contacts are provided by cysteine 219 and cysteine 222.

It belongs to the NifU family.

It localises to the mitochondrion. In terms of biological role, molecular scaffold for [Fe-S] cluster assembly of mitochondrial iron-sulfur proteins. This Drosophila simulans (Fruit fly) protein is NFU1 iron-sulfur cluster scaffold homolog, mitochondrial.